A 100-amino-acid chain; its full sequence is MTKLFDSRLADVIRKPVITEKATNALDLNQYTFEVDHRAAKPEIKAAIEALFSVKVIGVNTMNPPRRTRRVGKFSGKRSQVKKAIVRLAEGDKIQLFPES.

The protein belongs to the universal ribosomal protein uL23 family. In terms of assembly, part of the 50S ribosomal subunit. Contacts protein L29, and trigger factor when it is bound to the ribosome.

Its function is as follows. One of the early assembly proteins it binds 23S rRNA. One of the proteins that surrounds the polypeptide exit tunnel on the outside of the ribosome. Forms the main docking site for trigger factor binding to the ribosome. The chain is Large ribosomal subunit protein uL23 from Prochlorococcus marinus (strain MIT 9215).